A 674-amino-acid chain; its full sequence is Death-associated protein kinase related (674 aa).

The Protein kinase domain maps to 37–295 (EVEQTPFARG…ATGCLDHIWL (259 aa)). Residues 43-51 (FARGKFAAV) and Lys66 contribute to the ATP site. Catalysis depends on Asp160, which acts as the Proton acceptor. Disordered regions lie at residues 308–388 (QPQS…GGSI), 412–440 (TLTS…SDKE), 511–583 (DSSG…TSGS), and 614–650 (TSSA…HHHV). Over residues 312–343 (DAEEEEEEDVDDDVEDEEEEEQVEEEEEETQN) the composition is skewed to acidic residues. The span at 352–363 (PQQQQQPVQQHQ) shows a compositional bias: low complexity. Over residues 373–382 (KPTHNGHHRA) the composition is skewed to basic residues. Phosphoserine occurs at positions 384, 387, 435, 437, and 521. The segment covering 512 to 525 (SSGSAVARRSGGAV) has biased composition (low complexity). Polar residues-rich tracts occupy residues 526–541 (TSSS…SVRL) and 555–564 (YKKQTSQNGC). Composition is skewed to low complexity over residues 565 to 583 (SSTS…TSGS) and 614 to 631 (TSSA…TSAA). The segment covering 632-650 (HHLHHHHMHHHHHHHHHHV) has biased composition (basic residues).

Belongs to the protein kinase superfamily. Ser/Thr protein kinase family.

The catalysed reaction is L-seryl-[protein] + ATP = O-phospho-L-seryl-[protein] + ADP + H(+). It carries out the reaction L-threonyl-[protein] + ATP = O-phospho-L-threonyl-[protein] + ADP + H(+). The sequence is that of Death-associated protein kinase related (Drak) from Drosophila melanogaster (Fruit fly).